The chain runs to 890 residues: Leucine-rich repeat receptor-like tyrosine-protein kinase PXC3 (890 aa).

Positions 1 to 23 are cleaved as a signal peptide; the sequence is MTFWCMSILLIVGFLSKSELCEA. Residues 24–534 lie on the Extracellular side of the membrane; the sequence is QLSDEATLVA…LRYNHRVSYR (511 aa). Asn46, Asn61, Asn78, and Asn108 each carry an N-linked (GlcNAc...) asparagine glycan. LRR repeat units follow at residues 67–85, 86–108, 110–132, 133–157, 159–181, 182–205, 206–229, 231–254, 256–276, 278–300, 301–325, 326–349, 350–373, 375–397, 399–421, 422–446, 447–469, and 471–492; these read MLDL…ISDL, RSLK…SFGN, SELE…EFGK, LRGL…LKVL, RLEE…VGNL, SSLR…LGLV, SELE…IFEK, KLKV…GICS, LSSI…TIGN, SGLT…EFSK, CSNL…LGQL, INLQ…FLGS, GNLN…LCSM, RLQY…IGNC, KLLQ…IGRM, RNLQ…LGKL, DKLV…LLKG, and MSLI…VFVP. N-linked (GlcNAc...) asparagine glycans are attached at residues Asn140, Asn171, and Asn180. 3 N-linked (GlcNAc...) asparagine glycosylation sites follow: Asn276, Asn289, and Asn303. Residue Asn363 is glycosylated (N-linked (GlcNAc...) asparagine). A glycan (N-linked (GlcNAc...) asparagine) is linked at Asn429. N-linked (GlcNAc...) asparagine glycosylation is found at Asn477 and Asn498. Residues 535–555 traverse the membrane as a helical segment; that stretch reads IVLAVIGSGVAVFVSVTVVVL. Over 556–890 the chain is Cytoplasmic; the sequence is LFMMREKQEK…EMLQEVKQIK (335 aa). A Protein kinase domain is found at 608-886; sequence MKESNKLSTG…KKVVEMLQEV (279 aa). ATP is bound by residues 614 to 622 and Lys636; that span reads LSTGTFSSV. Asp735 serves as the catalytic Proton acceptor.

The protein belongs to the protein kinase superfamily. Tyr protein kinase family. Expressed in the vascular strands of cotyledons, the shoot apex, hypocotyls, roots, leaves, stems and flowers.

Its subcellular location is the cell membrane. The catalysed reaction is L-tyrosyl-[protein] + ATP = O-phospho-L-tyrosyl-[protein] + ADP + H(+). Functionally, leucine-rich repeat receptor-like protein kinase that may play a role in vascular tissues development. The chain is Leucine-rich repeat receptor-like tyrosine-protein kinase PXC3 from Arabidopsis thaliana (Mouse-ear cress).